Consider the following 86-residue polypeptide: Co-chaperonin GroES (86 aa).

The protein belongs to the GroES chaperonin family. As to quaternary structure, heptamer of 7 subunits arranged in a ring. Interacts with the chaperonin GroEL.

The protein resides in the cytoplasm. Together with the chaperonin GroEL, plays an essential role in assisting protein folding. The GroEL-GroES system forms a nano-cage that allows encapsulation of the non-native substrate proteins and provides a physical environment optimized to promote and accelerate protein folding. GroES binds to the apical surface of the GroEL ring, thereby capping the opening of the GroEL channel. The sequence is that of Co-chaperonin GroES from Campylobacter lari (strain RM2100 / D67 / ATCC BAA-1060).